The chain runs to 447 residues: Argininosuccinate synthase (447 aa).

ATP-binding positions include 12–20 (AYSGGLDTS) and A39. L-citrulline contacts are provided by Y92 and S97. G122 is a binding site for ATP. The L-aspartate site is built by T124, N128, and D129. N128 is a binding site for L-citrulline. L-citrulline-binding residues include R132, S182, S191, E267, and Y279.

It belongs to the argininosuccinate synthase family. Type 1 subfamily. As to quaternary structure, homotetramer.

It localises to the cytoplasm. It carries out the reaction L-citrulline + L-aspartate + ATP = 2-(N(omega)-L-arginino)succinate + AMP + diphosphate + H(+). The protein operates within amino-acid biosynthesis; L-arginine biosynthesis; L-arginine from L-ornithine and carbamoyl phosphate: step 2/3. The polypeptide is Argininosuccinate synthase (Sulfurovum sp. (strain NBC37-1)).